The following is a 72-amino-acid chain: Large ribosomal subunit protein bL31 (72 aa).

It belongs to the bacterial ribosomal protein bL31 family. Type A subfamily. Part of the 50S ribosomal subunit.

Binds the 23S rRNA. This Deinococcus deserti (strain DSM 17065 / CIP 109153 / LMG 22923 / VCD115) protein is Large ribosomal subunit protein bL31.